The following is a 721-amino-acid chain: Polyphosphate kinase (721 aa).

Asn-47 contacts ATP. Mg(2+) contacts are provided by Arg-377 and Arg-407. His-437 functions as the Phosphohistidine intermediate in the catalytic mechanism. Tyr-471, Arg-567, and His-595 together coordinate ATP.

Belongs to the polyphosphate kinase 1 (PPK1) family. Mg(2+) is required as a cofactor. An intermediate of this reaction is the autophosphorylated ppk in which a phosphate is covalently linked to a histidine residue through a N-P bond.

The enzyme catalyses [phosphate](n) + ATP = [phosphate](n+1) + ADP. Its function is as follows. Catalyzes the reversible transfer of the terminal phosphate of ATP to form a long-chain polyphosphate (polyP). The polypeptide is Polyphosphate kinase (Exiguobacterium sp. (strain ATCC BAA-1283 / AT1b)).